Here is a 358-residue protein sequence, read N- to C-terminus: Peptide chain release factor 1 (358 aa).

Position 233 is an N5-methylglutamine (glutamine 233).

Belongs to the prokaryotic/mitochondrial release factor family. In terms of processing, methylated by PrmC. Methylation increases the termination efficiency of RF1.

The protein localises to the cytoplasm. Peptide chain release factor 1 directs the termination of translation in response to the peptide chain termination codons UAG and UAA. The protein is Peptide chain release factor 1 of Staphylococcus carnosus (strain TM300).